The following is a 367-amino-acid chain: tRNA uridine(34) hydroxylase (367 aa).

In terms of domain architecture, Rhodanese spans 159–253 (EDENSIVVDV…YAHEVSQKGL (95 aa)). Cysteine 213 (cysteine persulfide intermediate) is an active-site residue.

The protein belongs to the TrhO family.

The catalysed reaction is uridine(34) in tRNA + AH2 + O2 = 5-hydroxyuridine(34) in tRNA + A + H2O. In terms of biological role, catalyzes oxygen-dependent 5-hydroxyuridine (ho5U) modification at position 34 in tRNAs. The sequence is that of tRNA uridine(34) hydroxylase from Leptospira interrogans serogroup Icterohaemorrhagiae serovar Lai (strain 56601).